Consider the following 53-residue polypeptide: uncharacterized protein (53 aa).

It localises to the mitochondrion. This is an uncharacterized protein from Saccharomyces cerevisiae (strain ATCC 204508 / S288c) (Baker's yeast).